Reading from the N-terminus, the 294-residue chain is Acetylglutamate kinase (294 aa).

Substrate-binding positions include Gly-63–Gly-64, Arg-85, and Asn-188.

It belongs to the acetylglutamate kinase family. ArgB subfamily.

The protein resides in the cytoplasm. The catalysed reaction is N-acetyl-L-glutamate + ATP = N-acetyl-L-glutamyl 5-phosphate + ADP. The protein operates within amino-acid biosynthesis; L-arginine biosynthesis; N(2)-acetyl-L-ornithine from L-glutamate: step 2/4. In terms of biological role, catalyzes the ATP-dependent phosphorylation of N-acetyl-L-glutamate. The sequence is that of Acetylglutamate kinase from Methanococcus maripaludis (strain C5 / ATCC BAA-1333).